Reading from the N-terminus, the 201-residue chain is MDATVKKMSPETSRPSREEAENAVRTLLRWAGDDPSREGLLDTPKRVAKAYGELFGGYNVNVEDVLGTTFEEVGGYNDIVLVRDIPFFSHCEHHMLPVIGKAHVAYLPNGRVLGLSKIARVVDLFARRLQTQETMTAQIADSLVQYLQPRGVAVMVDAEHMCMAMRGIQKSGSTTLTTTFTGEFKTDVPQQVRFMTMVQNR.

The disordered stretch occupies residues 1 to 20; that stretch reads MDATVKKMSPETSRPSREEA. The Zn(2+) site is built by Cys91, His94, and Cys162.

Belongs to the GTP cyclohydrolase I family. As to quaternary structure, homomer.

The enzyme catalyses GTP + H2O = 7,8-dihydroneopterin 3'-triphosphate + formate + H(+). It functions in the pathway cofactor biosynthesis; 7,8-dihydroneopterin triphosphate biosynthesis; 7,8-dihydroneopterin triphosphate from GTP: step 1/1. This chain is GTP cyclohydrolase 1, found in Allorhizobium ampelinum (strain ATCC BAA-846 / DSM 112012 / S4) (Agrobacterium vitis (strain S4)).